The following is a 755-amino-acid chain: Photosystem I P700 chlorophyll a apoprotein A1 (755 aa).

The next 8 helical transmembrane spans lie at 72 to 95, 158 to 181, 197 to 221, 297 to 315, 352 to 375, 391 to 417, 439 to 461, and 536 to 554; these read IFSAHFGHLAVVFIWLSGMYFHGA, LYCTAIGGLVMAGLMLFAGWFHYH, LNHHLAGLLGLGSLSWAGHQIHVSL, TAHHHLAIAVLFIIAGHMY, WHAQLAINLAMMGSLSIIVAQHMY, LSLFTHHMWIGGFLVVGGAAHGAIFMV, AIISHLNWVCIFLGFHSFGLYVH, and FMVHHIHAFTIHVTVLILL. [4Fe-4S] cluster is bound by residues cysteine 578 and cysteine 587. 2 helical membrane-spanning segments follow: residues 594-615 and 669-691; these read HVFLGLFWMYNCISVVIFHFSW and LSAYGLLFLGAHFIWAFSLMFLF. Residue histidine 680 coordinates chlorophyll a'. The chlorophyll a site is built by methionine 688 and tyrosine 696. Position 697 (tryptophan 697) interacts with phylloquinone. Residues 729 to 749 form a helical membrane-spanning segment; the sequence is AVGVAHYLLGGIATTWAFFLA.

This sequence belongs to the PsaA/PsaB family. As to quaternary structure, the PsaA/B heterodimer binds the P700 chlorophyll special pair and subsequent electron acceptors. PSI consists of a core antenna complex that captures photons, and an electron transfer chain that converts photonic excitation into a charge separation. The cyanobacterial PSI reaction center is composed of one copy each of PsaA,B,C,D,E,F,I,J,K,L,M and X, and forms trimeric complexes. The cofactor is PSI electron transfer chain: 5 chlorophyll a, 1 chlorophyll a', 2 phylloquinones and 3 4Fe-4S clusters. PSI core antenna: 90 chlorophyll a, 22 carotenoids, 3 phospholipids and 1 galactolipid. P700 is a chlorophyll a/chlorophyll a' dimer, A0 is one or more chlorophyll a, A1 is one or both phylloquinones and FX is a shared 4Fe-4S iron-sulfur center..

It is found in the cellular thylakoid membrane. It carries out the reaction reduced [plastocyanin] + hnu + oxidized [2Fe-2S]-[ferredoxin] = oxidized [plastocyanin] + reduced [2Fe-2S]-[ferredoxin]. In terms of biological role, psaA and PsaB bind P700, the primary electron donor of photosystem I (PSI), as well as the electron acceptors A0, A1 and FX. PSI is a plastocyanin/cytochrome c6-ferredoxin oxidoreductase, converting photonic excitation into a charge separation, which transfers an electron from the donor P700 chlorophyll pair to the spectroscopically characterized acceptors A0, A1, FX, FA and FB in turn. Oxidized P700 is reduced on the lumenal side of the thylakoid membrane by plastocyanin or cytochrome c6. The chain is Photosystem I P700 chlorophyll a apoprotein A1 from Thermostichus vulcanus (Synechococcus vulcanus).